A 1150-amino-acid chain; its full sequence is PAN2-PAN3 deadenylation complex catalytic subunit pan2 (1150 aa).

2 WD repeats span residues 96 to 139 and 270 to 309; these read AHEE…DKLH and ANVS…HFNE. The linker stretch occupies residues 310–446; that stretch reads MSKEAEFGDV…GAKINGETDD (137 aa). In terms of domain architecture, USP spans 447-816; sequence DPLLKYSNVE…IPCVLAYQVQ (370 aa). Positions 865–1043 constitute an Exonuclease domain; that stretch reads VALDTEFVDL…IEDARMALRL (179 aa). A divalent metal cation contacts are provided by aspartate 868, glutamate 870, aspartate 977, and aspartate 1036. The disordered stretch occupies residues 1074–1150; that stretch reads PPPRNGVPTV…GDFFSGSPLK (77 aa). Residues 1091 to 1106 show a composition bias toward polar residues; it reads VTMQNNSGRNTPSTSD. A compositionally biased stretch (low complexity) spans 1108–1120; that stretch reads AGAAASAPATPRQ.

It belongs to the peptidase C19 family. PAN2 subfamily. Forms a heterotrimer with an asymmetric homodimer of the regulatory subunit pan3 to form the poly(A)-nuclease (PAN) deadenylation complex. Requires a divalent metal cation as cofactor.

Its subcellular location is the cytoplasm. The enzyme catalyses Exonucleolytic cleavage of poly(A) to 5'-AMP.. With respect to regulation, positively regulated by the regulatory subunit pan3. Functionally, catalytic subunit of the poly(A)-nuclease (PAN) deadenylation complex, one of two cytoplasmic mRNA deadenylases involved in mRNA turnover. PAN specifically shortens poly(A) tails of RNA and the activity is stimulated by poly(A)-binding protein pab1. PAN deadenylation is followed by rapid degradation of the shortened mRNA tails by the CCR4-NOT complex. Deadenylated mRNAs are then degraded by two alternative mechanisms, namely exosome-mediated 3'-5' exonucleolytic degradation, or deadenylation-dependent mRNA decaping and subsequent 5'-3' exonucleolytic degradation by xrn1. May also be involved in post-transcriptional maturation of mRNA poly(A) tails. In Aspergillus niger (strain ATCC MYA-4892 / CBS 513.88 / FGSC A1513), this protein is PAN2-PAN3 deadenylation complex catalytic subunit pan2.